The following is a 352-amino-acid chain: uncharacterized protein (352 aa).

The signal sequence occupies residues 1-21 (MNVDSRVFRFFLVFLILVVVA).

Belongs to the bacterial solute-binding protein 1 family. WtpA subfamily.

This is an uncharacterized protein from Methanosarcina acetivorans (strain ATCC 35395 / DSM 2834 / JCM 12185 / C2A).